Reading from the N-terminus, the 128-residue chain is Ribonuclease pancreatic (128 aa).

Over residues 1–13 (KESPAMKFERQHM) the composition is skewed to basic and acidic residues. The segment at 1 to 26 (KESPAMKFERQHMDSGSTSSSNPTYC) is disordered. Residues lysine 7 and arginine 10 each coordinate substrate. The active-site Proton acceptor is the histidine 12. The segment covering 14 to 26 (DSGSTSSSNPTYC) has biased composition (polar residues). 4 disulfides stabilise this stretch: cysteine 26–cysteine 84, cysteine 40–cysteine 95, cysteine 58–cysteine 110, and cysteine 65–cysteine 72. Asparagine 34 carries N-linked (GlcNAc...) asparagine glycosylation. 41–45 (KPVNT) contacts substrate. Asparagine 62 carries an N-linked (GlcNAc...) asparagine glycan. Positions 66 and 85 each coordinate substrate. The active-site Proton donor is histidine 119.

It belongs to the pancreatic ribonuclease family. As to quaternary structure, monomer. Interacts with and forms tight 1:1 complexes with RNH1. Dimerization of two such complexes may occur. Interaction with RNH1 inhibits this protein. Pancreas.

It is found in the secreted. It carries out the reaction an [RNA] containing cytidine + H2O = an [RNA]-3'-cytidine-3'-phosphate + a 5'-hydroxy-ribonucleotide-3'-[RNA].. The catalysed reaction is an [RNA] containing uridine + H2O = an [RNA]-3'-uridine-3'-phosphate + a 5'-hydroxy-ribonucleotide-3'-[RNA].. Functionally, endonuclease that catalyzes the cleavage of RNA on the 3' side of pyrimidine nucleotides. Acts on single-stranded and double-stranded RNA. The sequence is that of Ribonuclease pancreatic (RNASE1) from Equus caballus (Horse).